A 53-amino-acid polypeptide reads, in one-letter code: Lectin alpha chain (53 aa).

Belongs to the leguminous lectin family. As to quaternary structure, tetramer of two alpha and two beta chains.

This chain is Lectin alpha chain, found in Lathyrus clymenum (Spanish vetchling).